Here is a 112-residue protein sequence, read N- to C-terminus: Nitrogenase iron-iron protein delta chain (112 aa).

In terms of assembly, hexamer of two alpha, two beta, and two delta chains. Iron-sulfur cluster is required as a cofactor.

The catalysed reaction is N2 + 8 reduced [2Fe-2S]-[ferredoxin] + 16 ATP + 16 H2O = H2 + 8 oxidized [2Fe-2S]-[ferredoxin] + 2 NH4(+) + 16 ADP + 16 phosphate + 6 H(+). The key enzymatic reactions in nitrogen fixation are catalyzed by the nitrogenase complex, which has 2 components: the iron protein (component 2) and a component 1 which is either a molybdenum-iron protein, a vanadium-iron, or an iron-iron protein. This chain is Nitrogenase iron-iron protein delta chain (anfG), found in Azomonas macrocytogenes (Azotobacter macrocytogenes).